The following is a 723-amino-acid chain: Methionine--tRNA ligase (723 aa).

The 'HIGH' region signature appears at proline 12–histidine 22. Residues cysteine 143, cysteine 146, cysteine 156, and cysteine 159 each contribute to the Zn(2+) site. The short motif at lysine 345–serine 349 is the 'KMSKS' region element. Residue lysine 348 participates in ATP binding. Residues proline 568 to alanine 604 form a disordered region. Residues aspartate 612–lysine 723 enclose the tRNA-binding domain.

This sequence belongs to the class-I aminoacyl-tRNA synthetase family. MetG type 1 subfamily. Homodimer. The cofactor is Zn(2+).

The protein resides in the cytoplasm. It carries out the reaction tRNA(Met) + L-methionine + ATP = L-methionyl-tRNA(Met) + AMP + diphosphate. Is required not only for elongation of protein synthesis but also for the initiation of all mRNA translation through initiator tRNA(fMet) aminoacylation. This Azoarcus sp. (strain BH72) protein is Methionine--tRNA ligase.